The primary structure comprises 49 residues: Glycolactin (49 aa).

The protein belongs to the pancreatic ribonuclease family. In terms of processing, glycosylated. Milk.

It localises to the secreted. In terms of biological role, manifests poly C-specific RNase activity toward yeast tRNA, elicits a dose-dependent inhibition of cell-free translation, inhibits formation of superoxide ions in vitro and inhibits the hemagglutinating activities of soybean lectin and Ricinus communis agglutinin 120. Inhibits HIV-1 reverse transcriptase. The protein is Glycolactin of Bos taurus (Bovine).